The following is a 512-amino-acid chain: MTDDYSKLKSEIMDLVSEEFLKTKDDIISVMIENNKLKRAELVVGNDSLPPPPPTPSIVKIEHTTTTSNIDDLPLPPPIQEVEEEEPTQQNIEQQQQTQDESDDYYKTVHPLGVQDTYEDEEYFSSYSKISLHHEMVFDKRRTAAYYHAISKSKNIFKDKVVLDVGCGTGILSCFVAKAGAKKVYAVDASDMAHRAELIVQQNGLADIVTVFKGKLEHIAFPEYVDVIVSEWQGAFLIFESMIESVIYARDNLMRPGGIILPSKASIYLSPINVDSFYNQYINQWSNVFNLDMSPLIPFAQEELLEEKTIRNYYVDNQDSVLDKPIILRTIDLSTITIEDLSKTVKTFEFQVPNGSKYHGFGSWFSVWFENLDDDDDDNDNNNNNNDNSNDDENKQQFAYYTIDRDGELVKSTYQQYSIDSKGLTPLFFKQSSNVLELSTAPGTGDQHWKQVLFLNSKEKILQSSDKQLDTTSIKGTIRILQNKDYRRHWWIEMYVSLKTNPFDYSYQKYLI.

The tract at residues Thr67–Asp103 is disordered. Positions Thr88 to Gln99 are enriched in low complexity. The SAM-dependent MTase PRMT-type domain occupies Asp120–Gln508. Residues His133, Arg142, Gly166, and Glu217 each contribute to the S-adenosyl-L-methionine site. Residues Glu231 and Glu240 contribute to the active site. The disordered stretch occupies residues Asp375–Lys395.

The protein belongs to the class I-like SAM-binding methyltransferase superfamily. Protein arginine N-methyltransferase family.

It localises to the cytoplasm. The protein resides in the nucleus. It catalyses the reaction L-arginyl-[protein] + 2 S-adenosyl-L-methionine = N(omega),N(omega)-dimethyl-L-arginyl-[protein] + 2 S-adenosyl-L-homocysteine + 2 H(+). In terms of biological role, arginine methyltransferase that methylates the guanidino nitrogens of arginyl residues in some proteins such as histones. The chain is Protein arginine N-methyltransferase 2 (prmt2) from Dictyostelium discoideum (Social amoeba).